The chain runs to 344 residues: Inositol 2-dehydrogenase/D-chiro-inositol 3-dehydrogenase (344 aa).

It belongs to the Gfo/Idh/MocA family. Homotetramer.

The catalysed reaction is myo-inositol + NAD(+) = scyllo-inosose + NADH + H(+). It carries out the reaction 1D-chiro-inositol + NAD(+) = scyllo-inosine + NADH + H(+). It functions in the pathway polyol metabolism; myo-inositol degradation into acetyl-CoA; acetyl-CoA from myo-inositol: step 1/7. Its function is as follows. Involved in the oxidation of myo-inositol (MI) and D-chiro-inositol (DCI) to 2-keto-myo-inositol (2KMI or 2-inosose) and 1-keto-D-chiro-inositol (1KDCI), respectively. This chain is Inositol 2-dehydrogenase/D-chiro-inositol 3-dehydrogenase, found in Bacillus velezensis (strain DSM 23117 / BGSC 10A6 / LMG 26770 / FZB42) (Bacillus amyloliquefaciens subsp. plantarum).